We begin with the raw amino-acid sequence, 246 residues long: Type III pantothenate kinase (246 aa).

11–18 (DIGNSFIK) is a binding site for ATP. Residues Tyr-95 and 102-105 (GVDR) contribute to the substrate site. The active-site Proton acceptor is Asp-104. Asp-125 serves as a coordination point for K(+). Thr-128 lines the ATP pocket. Thr-179 provides a ligand contact to substrate.

Belongs to the type III pantothenate kinase family. As to quaternary structure, homodimer. NH4(+) serves as cofactor. It depends on K(+) as a cofactor.

Its subcellular location is the cytoplasm. It catalyses the reaction (R)-pantothenate + ATP = (R)-4'-phosphopantothenate + ADP + H(+). The protein operates within cofactor biosynthesis; coenzyme A biosynthesis; CoA from (R)-pantothenate: step 1/5. In terms of biological role, catalyzes the phosphorylation of pantothenate (Pan), the first step in CoA biosynthesis. This Pseudoalteromonas atlantica (strain T6c / ATCC BAA-1087) protein is Type III pantothenate kinase.